Reading from the N-terminus, the 311-residue chain is F-box protein At3g18320 (311 aa).

Residues Met1–Lys46 enclose the F-box domain.

This is F-box protein At3g18320 from Arabidopsis thaliana (Mouse-ear cress).